The primary structure comprises 88 residues: Small ribosomal subunit protein uS15 (88 aa).

Belongs to the universal ribosomal protein uS15 family. Part of the 30S ribosomal subunit. Forms a bridge to the 50S subunit in the 70S ribosome, contacting the 23S rRNA.

Its function is as follows. One of the primary rRNA binding proteins, it binds directly to 16S rRNA where it helps nucleate assembly of the platform of the 30S subunit by binding and bridging several RNA helices of the 16S rRNA. In terms of biological role, forms an intersubunit bridge (bridge B4) with the 23S rRNA of the 50S subunit in the ribosome. The sequence is that of Small ribosomal subunit protein uS15 from Psychrobacter arcticus (strain DSM 17307 / VKM B-2377 / 273-4).